The following is a 271-amino-acid chain: Shikimate dehydrogenase (NADP(+)) (271 aa).

Shikimate contacts are provided by residues 14-16 and Thr61; that span reads SQS. Lys65 serves as the catalytic Proton acceptor. Asn86 and Asp101 together coordinate shikimate. NADP(+) is bound by residues 125–129, 148–153, and Met212; these read GAGGA and NRTHAR. Tyr214 serves as a coordination point for shikimate. Gly236 contributes to the NADP(+) binding site.

It belongs to the shikimate dehydrogenase family. In terms of assembly, homodimer.

It catalyses the reaction shikimate + NADP(+) = 3-dehydroshikimate + NADPH + H(+). It functions in the pathway metabolic intermediate biosynthesis; chorismate biosynthesis; chorismate from D-erythrose 4-phosphate and phosphoenolpyruvate: step 4/7. In terms of biological role, involved in the biosynthesis of the chorismate, which leads to the biosynthesis of aromatic amino acids. Catalyzes the reversible NADPH linked reduction of 3-dehydroshikimate (DHSA) to yield shikimate (SA). The sequence is that of Shikimate dehydrogenase (NADP(+)) from Edwardsiella ictaluri (strain 93-146).